We begin with the raw amino-acid sequence, 242 residues long: Dihydropteridine reductase (242 aa).

Leu12 to Ala36 contributes to the NADP(+) binding site. An N6-succinyllysine mark is found at Lys71, Lys77, Lys94, and Lys100. The active-site Proton acceptor is Tyr148.

Belongs to the short-chain dehydrogenases/reductases (SDR) family. Homodimer.

It catalyses the reaction 5,6,7,8-tetrahydropteridine + NAD(+) = 6,7-dihydropteridine + NADH + H(+). The enzyme catalyses 5,6,7,8-tetrahydropteridine + NADP(+) = 6,7-dihydropteridine + NADPH + H(+). Catalyzes the conversion of quinonoid dihydrobiopterin into tetrahydrobiopterin. This Bos taurus (Bovine) protein is Dihydropteridine reductase (QDPR).